The primary structure comprises 473 residues: Mogroside IIIx synthase (473 aa).

Histidine 43 acts as the Proton acceptor in catalysis. Aspartate 142 acts as the Charge relay in catalysis. Positions 293, 356, 374, 375, 376, 379, 395, and 396 each coordinate UDP-alpha-D-glucose.

The protein belongs to the UDP-glycosyltransferase family. Highly expressed in mature fruits.

The catalysed reaction is mogroside IIE + UDP-alpha-D-glucose = mogroside IIIX + UDP + H(+). The enzyme catalyses mogroside III + UDP-alpha-D-glucose = mogroside IV + UDP + H(+). It carries out the reaction mogroside III + UDP-alpha-D-glucose = siamenoside I + UDP + H(+). It catalyses the reaction mogroside IIIX + UDP-alpha-D-glucose = mogroside IVA + UDP + H(+). The catalysed reaction is mogroside IIIX + UDP-alpha-D-glucose = siamenoside I + UDP + H(+). The enzyme catalyses mogroside IV + UDP-alpha-D-glucose = mogroside V + UDP + H(+). It carries out the reaction siamenoside I + UDP-alpha-D-glucose = mogroside V + UDP + H(+). It catalyses the reaction mogroside V + UDP-alpha-D-glucose = mogroside VI + UDP + H(+). The protein operates within secondary metabolite biosynthesis; terpenoid biosynthesis. Its activity is regulated as follows. Activity is increased by Mg(2+). Functionally, UDP-glycosyltransferase involved in the biosynthesis of cucurbitacin and mogroside tetracyclic triterpene natural products (e.g. siamenoside I and mogrosides IV, V and VI). Cucurbitacins have cytotoxic properties and exhibit deterrent taste as a defense barrier against herbivores. Mogrosides are nonsugar highly oxygenated compounds used as high-intensity zero-calorie sweeteners; they also possess pharmacological properties such as regulating immunity, lowering blood sugar and lipid levels, protecting the liver, and acting as antioxidants and antitumor agents. In terms of biological role, catalyzes the branched glucosylations of mogroside II-E, mogroside III, mogroside IIIx, mogroside IV, mogroside IV-A, siamenoside I and mogroside V, ending in the production of mogroside VI. Catalyzes the beta(1-6) branched glucosylations of mogroside II-E to produce mogroside IIIx by forming a beta(1-6) glycosidic bond with the 6-hydroxyl of glucose 1-C24; a subsequent glycosylation at glucose 1-C3 leads to the formation of mogroside IV-A with beta(1-6) glycosidic bond. Can also use mogroside III-E, mogroside III-A, mogroside IV-E and mogroside IV-A as substrates. This is Mogroside IIIx synthase from Siraitia grosvenorii (Monk's fruit).